The sequence spans 550 residues: MFCVQCEQTIRTPAGNGCSYAQGMCGKTAETSDLQDLLIATLQGLSAWAVKAREYGIINHDVDSFAPRAFFSTLTNVNFDSPRIVGYAREAIALREALKAQCLAVDANARVDNPMADLQLVSDDLGELQRQAAEFTPNKDKAAIGENILGLRLLCLYGLKGAAAYMEHAHVLGQYDNDIYAQYHKIMAWLGTWPADMNALLECSMEIGQMNFKVMSILDAGETGKYGHPTPTQVNVKATAGKCILISGHDLKDLYNLLEQTEGTGVNVYTHGEMLPAHGYPELRKFKHLVGNYGSGWQNQQVEFARFPGPIVMTSNCIIDPTVGAYDDRIWTRSIVGWPGVRHLDGEDFSAVIAQAQQMAGFPYSEIPHLITVGFGRQTLLGAADTLIDLVSREKLRHIFLLGGCDGARGERHYFTDFATSVPDDCLILTLACGKYRFNKLEFGDIEGLPRLVDAGQCNDAYSAIILAVTLAEKLGCGVNDLPLSLVLSWFEQKAIVILLTLLSLGVKNIVTGPTAPGFLTPDLLAVLNEKFGLRSITTVEEDMKQLLSA.

The [2Fe-2S] cluster site is built by Cys-3, Cys-6, Cys-18, and Cys-25. Residues His-249, Glu-273, Cys-317, Cys-405, Cys-433, Cys-458, Glu-492, and Lys-494 each contribute to the hybrid [4Fe-2O-2S] cluster site. Cys-405 bears the Cysteine persulfide mark.

The protein belongs to the HCP family. [2Fe-2S] cluster serves as cofactor. It depends on hybrid [4Fe-2O-2S] cluster as a cofactor.

Its subcellular location is the cytoplasm. It carries out the reaction A + NH4(+) + H2O = hydroxylamine + AH2 + H(+). In terms of biological role, catalyzes the reduction of hydroxylamine to form NH(3) and H(2)O. The protein is Hydroxylamine reductase of Escherichia coli O6:H1 (strain CFT073 / ATCC 700928 / UPEC).